The chain runs to 353 residues: Polycomb group RING finger protein 6 (353 aa).

The interval 1-116 is disordered; it reads MDEAETDATE…FSLRLESGRA (116 aa). Residues 9 to 19 are compositionally biased toward basic and acidic residues; that stretch reads TENKRASEAKR. Over residues 23-39 the composition is skewed to pro residues; that stretch reads MPPPPPPPPPISPPALI. Phosphoserine is present on serine 34. The segment covering 40-52 has biased composition (low complexity); it reads PAPAAGEEGPASL. Positions 69–82 are enriched in basic and acidic residues; it reads EPERSLGRLRGRFE. Positions 71-112 form a coiled coil; the sequence is ERSLGRLRGRFEDYDEELEEEEEMEEEEEEEEEMSHFSLRLE. Residues 83-103 show a composition bias toward acidic residues; that stretch reads DYDEELEEEEEMEEEEEEEEE. Serine 118 carries the phosphoserine modification. An RING-type zinc finger spans residues 137 to 176; sequence CSICKGYLIDATTITECLHTFCKSCIVRHFYYSNRCPKCN. Residues lysine 226 and lysine 237 each participate in a glycyl lysine isopeptide (Lys-Gly) (interchain with G-Cter in SUMO2) cross-link.

In terms of assembly, component of a PRC1-like complex. Interacts with BMI1/PCGF4, RING1 and RNF2. Interacts with KDM5D. Interacts with CBX4, CBX6, CBX7 and CBX8. Phosphorylated during mitosis. Expressed in ovary, testis, stomach, liver, thymus and kidney (at protein level).

The protein resides in the nucleus. Functionally, transcriptional repressor. May modulate the levels of histone H3K4Me3 by activating KDM5D histone demethylase. Component of a Polycomb group (PcG) multiprotein PRC1-like complex, a complex class required to maintain the transcriptionally repressive state of many genes, including Hox genes, throughout development. PcG PRC1 complex acts via chromatin remodeling and modification of histones; it mediates monoubiquitination of histone H2A 'Lys-119', rendering chromatin heritably changed in its expressibility. Within the PRC1-like complex, regulates RNF2 ubiquitin ligase activity. This chain is Polycomb group RING finger protein 6 (Pcgf6), found in Mus musculus (Mouse).